Consider the following 212-residue polypeptide: MGQKVHPFGFRLGYNKNWQSRWYSKKEYPAFVFEDHNIRKFVKKTLYHAGLAKIEIERAGGKVRLILSTARPGIVIGRKGVEIEKLRADLRKKFKREFAIEVNEIRRPEVESQLVAENIALQLERRVAFRRAMKRTVSMARKFGAEGIKVTCSGRLAGAEIARTEWYRDGRVPLQTLRADIDFGFAEARTTYGVIGVKVWIFKGELLDNEVA.

The KH type-2 domain occupies 38-106 (IRKFVKKTLY…EFAIEVNEIR (69 aa)).

It belongs to the universal ribosomal protein uS3 family. In terms of assembly, part of the 30S ribosomal subunit. Forms a tight complex with proteins S10 and S14.

Its function is as follows. Binds the lower part of the 30S subunit head. Binds mRNA in the 70S ribosome, positioning it for translation. The polypeptide is Small ribosomal subunit protein uS3 (Nitratidesulfovibrio vulgaris (strain ATCC 29579 / DSM 644 / CCUG 34227 / NCIMB 8303 / VKM B-1760 / Hildenborough) (Desulfovibrio vulgaris)).